The primary structure comprises 490 residues: Betaine aldehyde dehydrogenase (490 aa).

T26, I27, and D93 together coordinate K(+). An NAD(+)-binding site is contributed by G150 to W152. The active-site Charge relay system is the K162. K176–E179 is a binding site for NAD(+). V180 provides a ligand contact to K(+). G230–S233 serves as a coordination point for NAD(+). L246 provides a ligand contact to K(+). The active-site Proton acceptor is E252. Residues G254, C286, and E387 each contribute to the NAD(+) site. The Nucleophile role is filled by C286. C286 bears the Cysteine sulfenic acid (-SOH) mark. Residues K457 and G460 each coordinate K(+). E464 acts as the Charge relay system in catalysis.

It belongs to the aldehyde dehydrogenase family. In terms of assembly, dimer of dimers. K(+) serves as cofactor.

It carries out the reaction betaine aldehyde + NAD(+) + H2O = glycine betaine + NADH + 2 H(+). It functions in the pathway amine and polyamine biosynthesis; betaine biosynthesis via choline pathway; betaine from betaine aldehyde: step 1/1. Functionally, involved in the biosynthesis of the osmoprotectant glycine betaine. Catalyzes the irreversible oxidation of betaine aldehyde to the corresponding acid. In Escherichia coli O7:K1 (strain IAI39 / ExPEC), this protein is Betaine aldehyde dehydrogenase.